A 403-amino-acid polypeptide reads, in one-letter code: Putative F-box protein At5g41500 (403 aa).

In terms of domain architecture, F-box spans Ala-2 to Met-47.

The protein is Putative F-box protein At5g41500 of Arabidopsis thaliana (Mouse-ear cress).